We begin with the raw amino-acid sequence, 322 residues long: Cyanophycinase (322 aa).

Residues Ser-178, Glu-196, and His-220 each act as charge relay system in the active site.

It belongs to the peptidase S51 family.

The catalysed reaction is [L-4-(L-arginin-2-N-yl)aspartate](n) + H2O = [L-4-(L-arginin-2-N-yl)aspartate](n-1) + L-4-(L-arginin-2-N-yl)aspartate. Functionally, exopeptidase that catalyzes the hydrolytic cleavage of multi-L-arginyl-poly-L-aspartic acid (cyanophycin; a water-insoluble reserve polymer) into aspartate-arginine dipeptides. The protein is Cyanophycinase (cphB) of Synechococcus elongatus.